Reading from the N-terminus, the 57-residue chain is MPAIQPPLYPTFLLLILLSLIITLYAWIISTITYKTAMRHAALYQRSFFRWSFDHSL.

Over 1-8 (MPAIQPPL) the chain is Virion surface. The chain crosses the membrane as a helical span at residues 9–29 (YPTFLLLILLSLIITLYAWII). Topologically, residues 30–57 (STITYKTAMRHAALYQRSFFRWSFDHSL) are intravirion.

This sequence belongs to the rubulavirus small hydrophobic protein family. As to quaternary structure, interacts with host TNFRSF1A, RIPK1 and IRAK1; these interactions interfere with host NF-kappa-B activation at the level of receptor complexes. Interacts with host protein UBQLN4.

It localises to the virion membrane. Its subcellular location is the host cell membrane. Functionally, plays a role in the inhibition of the host NF-kappa-B pathway. This inhibition occurs at the receptor level, by preventing the signaling of TNFR1 as well as IL-1R and TLR3. The chain is Small hydrophobic protein (SH) from Homo sapiens (Human).